A 962-amino-acid chain; its full sequence is Integrator complex subunit 7 (962 aa).

2 positions are modified to phosphoserine: serine 338 and serine 809.

Belongs to the Integrator subunit 7 family. Component of the Integrator complex, composed of core subunits INTS1, INTS2, INTS3, INTS4, INTS5, INTS6, INTS7, INTS8, INTS9/RC74, INTS10, INTS11/CPSF3L, INTS12, INTS13, INTS14 and INTS15. The core complex associates with protein phosphatase 2A subunits PPP2CA and PPP2R1A, to form the Integrator-PP2A (INTAC) complex. Interacts with NABP2.

It is found in the nucleus. It localises to the chromosome. The protein resides in the cytoplasm. Component of the integrator complex, a multiprotein complex that terminates RNA polymerase II (Pol II) transcription in the promoter-proximal region of genes. The integrator complex provides a quality checkpoint during transcription elongation by driving premature transcription termination of transcripts that are unfavorably configured for transcriptional elongation: the complex terminates transcription by (1) catalyzing dephosphorylation of the C-terminal domain (CTD) of Pol II subunit POLR2A/RPB1 and SUPT5H/SPT5, (2) degrading the exiting nascent RNA transcript via endonuclease activity and (3) promoting the release of Pol II from bound DNA. The integrator complex is also involved in terminating the synthesis of non-coding Pol II transcripts, such as enhancer RNAs (eRNAs), small nuclear RNAs (snRNAs), telomerase RNAs and long non-coding RNAs (lncRNAs). May be not involved in the recruitment of cytoplasmic dynein to the nuclear envelope by different components of the INT complex. Plays a role in DNA damage response (DDR) signaling during the S phase. The polypeptide is Integrator complex subunit 7 (INTS7) (Bos taurus (Bovine)).